The primary structure comprises 258 residues: Deoxyribose-phosphate aldolase (258 aa).

D101 functions as the Proton donor/acceptor in the catalytic mechanism. K166 acts as the Schiff-base intermediate with acetaldehyde in catalysis. K200 acts as the Proton donor/acceptor in catalysis.

This sequence belongs to the DeoC/FbaB aldolase family. DeoC type 2 subfamily.

It localises to the cytoplasm. The catalysed reaction is 2-deoxy-D-ribose 5-phosphate = D-glyceraldehyde 3-phosphate + acetaldehyde. It functions in the pathway carbohydrate degradation; 2-deoxy-D-ribose 1-phosphate degradation; D-glyceraldehyde 3-phosphate and acetaldehyde from 2-deoxy-alpha-D-ribose 1-phosphate: step 2/2. Functionally, catalyzes a reversible aldol reaction between acetaldehyde and D-glyceraldehyde 3-phosphate to generate 2-deoxy-D-ribose 5-phosphate. The sequence is that of Deoxyribose-phosphate aldolase from Actinobacillus pleuropneumoniae serotype 5b (strain L20).